Here is a 264-residue protein sequence, read N- to C-terminus: 3-methyl-2-oxobutanoate hydroxymethyltransferase (264 aa).

Mg(2+) is bound by residues D45 and D84. 3-methyl-2-oxobutanoate is bound by residues 45–46 (DS), D84, and K112. E114 serves as a coordination point for Mg(2+). E181 acts as the Proton acceptor in catalysis.

Belongs to the PanB family. Homodecamer; pentamer of dimers. Mg(2+) serves as cofactor.

The protein resides in the cytoplasm. It carries out the reaction 3-methyl-2-oxobutanoate + (6R)-5,10-methylene-5,6,7,8-tetrahydrofolate + H2O = 2-dehydropantoate + (6S)-5,6,7,8-tetrahydrofolate. The protein operates within cofactor biosynthesis; (R)-pantothenate biosynthesis; (R)-pantoate from 3-methyl-2-oxobutanoate: step 1/2. Catalyzes the reversible reaction in which hydroxymethyl group from 5,10-methylenetetrahydrofolate is transferred onto alpha-ketoisovalerate to form ketopantoate. The sequence is that of 3-methyl-2-oxobutanoate hydroxymethyltransferase from Shewanella putrefaciens (strain CN-32 / ATCC BAA-453).